The sequence spans 981 residues: Translation initiation factor IF-2 (981 aa).

The interval 31 to 370 (FVKSASSTVE…SKRAKRAEYE (340 aa)) is disordered. Low complexity predominate over residues 64-87 (GAAAPAARPAAKPGAPSPSAAKPG). Pro residues predominate over residues 88–111 (GPRPGPKPAAPAPAAPAAPAPAAP). A compositionally biased stretch (low complexity) spans 112–121 (AAPAAAAPAA). The span at 136-145 (PAQPARPAPA) shows a compositional bias: pro residues. The segment covering 146–165 (APAASAPAAPAAPAAPSTGA) has biased composition (low complexity). Pro residues predominate over residues 256–269 (RPSPGSMPPRPNPG). Residues 270–279 (AMPARSARPA) are compositionally biased toward low complexity. Over residues 280-339 (PGGGGRPGRPGGAPGGRPGGGGGGYRGGGAPGAGAGAGAPGGAAPAGGFRGRPGGGGRPG) the composition is skewed to gly residues. Over residues 356 to 365 (RRGRKSKRAK) the composition is skewed to basic residues. The region spanning 477 to 649 (SRPPVVTVMG…VLLTADASLD (173 aa)) is the tr-type G domain. A G1 region spans residues 486 to 493 (GHVDHGKT). 486–493 (GHVDHGKT) contacts GTP. Residues 511-515 (GITQH) form a G2 region. Positions 536-539 (DTPG) are G3. GTP is bound by residues 536 to 540 (DTPGH) and 590 to 593 (NKID). Residues 590-593 (NKID) form a G4 region. Residues 626–628 (SAK) form a G5 region.

This sequence belongs to the TRAFAC class translation factor GTPase superfamily. Classic translation factor GTPase family. IF-2 subfamily.

It localises to the cytoplasm. In terms of biological role, one of the essential components for the initiation of protein synthesis. Protects formylmethionyl-tRNA from spontaneous hydrolysis and promotes its binding to the 30S ribosomal subunits. Also involved in the hydrolysis of GTP during the formation of the 70S ribosomal complex. This is Translation initiation factor IF-2 from Rhodococcus erythropolis (strain PR4 / NBRC 100887).